Reading from the N-terminus, the 72-residue chain is Translation initiation factor IF-1 (72 aa).

Residues 1–72 (MAKEEAIEIE…TKGRITYRYK (72 aa)) form the S1-like domain.

This sequence belongs to the IF-1 family. Component of the 30S ribosomal translation pre-initiation complex which assembles on the 30S ribosome in the order IF-2 and IF-3, IF-1 and N-formylmethionyl-tRNA(fMet); mRNA recruitment can occur at any time during PIC assembly.

The protein resides in the cytoplasm. One of the essential components for the initiation of protein synthesis. Stabilizes the binding of IF-2 and IF-3 on the 30S subunit to which N-formylmethionyl-tRNA(fMet) subsequently binds. Helps modulate mRNA selection, yielding the 30S pre-initiation complex (PIC). Upon addition of the 50S ribosomal subunit IF-1, IF-2 and IF-3 are released leaving the mature 70S translation initiation complex. This chain is Translation initiation factor IF-1, found in Chlorobium phaeobacteroides (strain DSM 266 / SMG 266 / 2430).